Here is a 258-residue protein sequence, read N- to C-terminus: L-rhamnose-1-dehydrogenase (258 aa).

The NADP(+) site is built by Ile19, Asp68, and Asn95. Residues Ser147 and Tyr161 each act as proton donor in the active site. Tyr161, Lys165, Ile194, and Thr196 together coordinate NADP(+). The Lowers pKa of active site Tyr role is filled by Lys165.

It belongs to the short-chain dehydrogenases/reductases (SDR) family.

It carries out the reaction L-rhamnofuranose + NAD(+) = L-rhamnono-1,4-lactone + NADH + H(+). Functionally, NAD-dependent dehydrogenase that has high activity with L-rhamnose and L-lyxose, and shows only low activity with L-mannose. Has no activity with NADP. Catalyzes the first step in an alternative pathway for rhamnose utilization that does not involve phosphorylated intermediates. This chain is L-rhamnose-1-dehydrogenase (DHG2), found in Scheffersomyces stipitis (strain ATCC 58785 / CBS 6054 / NBRC 10063 / NRRL Y-11545) (Yeast).